Consider the following 255-residue polypeptide: Short chain dehydrogenase adrF (255 aa).

Residues Ile11, Arg118, Tyr150, Lys154, and Val183 each coordinate NADP(+). Tyr150 (proton acceptor) is an active-site residue. Catalysis depends on Lys154, which acts as the Lowers pKa of active site Tyr.

This sequence belongs to the short-chain dehydrogenases/reductases (SDR) family.

Its pathway is secondary metabolite biosynthesis; terpenoid biosynthesis. Functionally, short chain dehydrogenase; part of the gene cluster that mediates the biosynthesis of andrastins, meroterpenoid compounds that exhibit inhibitory activity against ras farnesyltransferase, suggesting that they could be promising leads for antitumor agents. The first step of the pathway is the synthesis of 3,5-dimethylorsellinic acid (DMOA) by the polyketide synthase adrD via condensation of one acetyl-CoA starter unit with 3 malonyl-CoA units and 2 methylations. DMAO is then converted to farnesyl-DMAO by the prenyltransferase adrG. The methyltransferase adrK catalyzes the methylation of the carboxyl group of farnesyl-DMAO to farnesyl-DMAO methyl ester which is further converted to epoxyfarnesyl-DMAO methyl ester by the FAD-dependent monooxygenase adrH. The terpene cyclase adrI then catalyzes the carbon skeletal rearrangement to generate the andrastin E, the first compound in the pathway having the andrastin scaffold, with the tetracyclic ring system. The post-cyclization tailoring enzymes adrF, adrE, adrJ, and adrA, are involved in the conversion of andrastin E into andrastin A. The short chain dehydrogenase adrF is responsible for the oxidation of the C-3 a hydroxyl group of andrastin E to yield the corresponding ketone, andrastin D. The ketoreductase adrE stereoselectively reduces the carbonyl moiety to reverse the stereochemistry of the C-3 position to yield andrastin F. The acetyltransferase adrJ is the acetyltransferase that attaches the acetyl group to the C-3 hydroxyl group of andrastin F to yield andrastin C. Finally, the cytochrome P450 monooxygenase adrA catalyzes two sequential oxidation reactions of the C-23 methyl group, to generate the corresponding alcohol andrastin B, and aldehyde andrastin A. The polypeptide is Short chain dehydrogenase adrF (Penicillium rubens (strain ATCC 28089 / DSM 1075 / NRRL 1951 / Wisconsin 54-1255) (Penicillium chrysogenum)).